The following is an 86-amino-acid chain: OMEGA-stichotoxin-Shd4a (86 aa).

A signal peptide spans 1 to 23 (MASFRTLFACVVILCCVLWSSMA). A propeptide spanning residues 24–36 (RYGEDMEVETEMN) is cleaved from the precursor. The 43-residue stretch at 40-82 (EGVRCTGQHASSFCLNGGTCRHIASLGEYYCICPGDYTGHRCD) folds into the EGF-like domain. 3 disulfide bridges follow: Cys-44/Cys-59, Cys-53/Cys-70, and Cys-72/Cys-81.

It belongs to the EGF domain peptide family.

Its subcellular location is the secreted. It is found in the nematocyst. Functionally, has both toxic and EGF activity. Its EGF activity consists of rounding cells (morphological change) and inducing tyrosine phosphorylation of the EGFR in A431 cells, but with a lower potency that human EGF. The protein is OMEGA-stichotoxin-Shd4a of Stichodactyla haddoni (Saddle carpet anemone).